Consider the following 702-residue polypeptide: Polyribonucleotide nucleotidyltransferase (702 aa).

2 residues coordinate Mg(2+): Asp485 and Asp491. Residues 552–611 (PKTSTLQIDPEKIRDVIGAGGKVINKIIADTGVKIDIKEDGLVYVSSAESEGVKEAVKII) form the KH domain. Residues 621–689 (GEIYLGKVTK…SQGRINLSRK (69 aa)) enclose the S1 motif domain.

Belongs to the polyribonucleotide nucleotidyltransferase family. Mg(2+) is required as a cofactor.

The protein resides in the cytoplasm. It catalyses the reaction RNA(n+1) + phosphate = RNA(n) + a ribonucleoside 5'-diphosphate. Functionally, involved in mRNA degradation. Catalyzes the phosphorolysis of single-stranded polyribonucleotides processively in the 3'- to 5'-direction. The chain is Polyribonucleotide nucleotidyltransferase from Clostridium perfringens (strain SM101 / Type A).